The chain runs to 264 residues: Agamous-like MADS-box protein AGL15 (264 aa).

One can recognise an MADS-box domain in the interval 3-57; sequence RGKIEIKRIENANSRQVTFSKRRAGLLKKAHELSVLCDAEVAVIVFSKSGKLFEF. The 91-residue stretch at 87-177 folds into the K-box domain; it reads NQEECTEVDL…RRQVQELRSF (91 aa). A disordered region spans residues 223–264; the sequence is LQLGLPGEAHDTRKNEGDRESPSSDSVTTSTTRATAQRISLV. The segment covering 230–244 has biased composition (basic and acidic residues); that stretch reads EAHDTRKNEGDRESP. The span at 245-257 shows a compositional bias: low complexity; it reads SSDSVTTSTTRAT.

The protein localises to the nucleus. In terms of biological role, probable transcription factor. The chain is Agamous-like MADS-box protein AGL15 (AGL15) from Brassica napus (Rape).